We begin with the raw amino-acid sequence, 417 residues long: Histidine--tRNA ligase (417 aa).

This sequence belongs to the class-II aminoacyl-tRNA synthetase family. Homodimer.

Its subcellular location is the cytoplasm. It catalyses the reaction tRNA(His) + L-histidine + ATP = L-histidyl-tRNA(His) + AMP + diphosphate + H(+). This Nitratidesulfovibrio vulgaris (strain DP4) (Desulfovibrio vulgaris) protein is Histidine--tRNA ligase.